We begin with the raw amino-acid sequence, 159 residues long: Ribonuclease H (159 aa).

Positions 10 to 153 (TQTQVVIYTD…ADALANQGVE (144 aa)) constitute an RNase H type-1 domain. Mg(2+) is bound by residues D19, E57, D79, and D145.

Belongs to the RNase H family. Monomer. Requires Mg(2+) as cofactor.

It is found in the cytoplasm. The enzyme catalyses Endonucleolytic cleavage to 5'-phosphomonoester.. Functionally, endonuclease that specifically degrades the RNA of RNA-DNA hybrids. The sequence is that of Ribonuclease H from Polaromonas sp. (strain JS666 / ATCC BAA-500).